Reading from the N-terminus, the 297-residue chain is 4-hydroxy-tetrahydrodipicolinate synthase (297 aa).

Position 55 (Thr-55) interacts with pyruvate. The Proton donor/acceptor role is filled by Tyr-144. Lys-172 functions as the Schiff-base intermediate with substrate in the catalytic mechanism. Position 213 (Ile-213) interacts with pyruvate.

It belongs to the DapA family. In terms of assembly, homotetramer; dimer of dimers.

Its subcellular location is the cytoplasm. It carries out the reaction L-aspartate 4-semialdehyde + pyruvate = (2S,4S)-4-hydroxy-2,3,4,5-tetrahydrodipicolinate + H2O + H(+). It functions in the pathway amino-acid biosynthesis; L-lysine biosynthesis via DAP pathway; (S)-tetrahydrodipicolinate from L-aspartate: step 3/4. Its function is as follows. Catalyzes the condensation of (S)-aspartate-beta-semialdehyde [(S)-ASA] and pyruvate to 4-hydroxy-tetrahydrodipicolinate (HTPA). In Lactococcus lactis subsp. cremoris (strain MG1363), this protein is 4-hydroxy-tetrahydrodipicolinate synthase.